The primary structure comprises 487 residues: Glutamyl-tRNA(Gln) amidotransferase subunit A (487 aa).

Catalysis depends on charge relay system residues K74 and S149. S173 (acyl-ester intermediate) is an active-site residue.

Belongs to the amidase family. GatA subfamily. Heterotrimer of A, B and C subunits.

It carries out the reaction L-glutamyl-tRNA(Gln) + L-glutamine + ATP + H2O = L-glutaminyl-tRNA(Gln) + L-glutamate + ADP + phosphate + H(+). Allows the formation of correctly charged Gln-tRNA(Gln) through the transamidation of misacylated Glu-tRNA(Gln) in organisms which lack glutaminyl-tRNA synthetase. The reaction takes place in the presence of glutamine and ATP through an activated gamma-phospho-Glu-tRNA(Gln). The polypeptide is Glutamyl-tRNA(Gln) amidotransferase subunit A (Synechococcus sp. (strain WH7803)).